Consider the following 1059-residue polypeptide: Disks large-associated protein 2 (1059 aa).

2 disordered regions span residues 31-54 (GEPE…PAEE) and 245-311 (KSHS…SDST). Positions 245–261 (KSHSLEGSSKSNINGTK) are enriched in polar residues. The segment covering 262-271 (SDSRVDDHHQ) has biased composition (basic and acidic residues). Basic residues predominate over residues 272-285 (SHLSKHSKRSKSKE). 4 positions are modified to phosphoserine: S302, S308, S390, and S456. Residues 613–669 (YKKTPPPVPPRTTSKPLISVTAQSSTESTQDAYQDSRAQRMSPWPQDSRGGLYNSMD) are disordered. A compositionally biased stretch (polar residues) spans 632–645 (VTAQSSTESTQDAY). Residues S667, S670, S673, and S720 each carry the phosphoserine modification. Positions 723–756 (VQDSEFPDHQPYPRSDVETATDSDTESRGLREYH) are disordered. Residue T743 is modified to Phosphothreonine. S745 carries the phosphoserine modification. Residues 747-756 (TESRGLREYH) show a composition bias toward basic and acidic residues. Phosphoserine is present on residues S776, S811, S983, and S1012. The tract at residues 985–1025 (ERKEERKIPPPIPKKPPKGKFPITREKSLDLPDRQRQEARR) is disordered. Positions 1007–1025 (ITREKSLDLPDRQRQEARR) are enriched in basic and acidic residues.

The protein belongs to the SAPAP family. In terms of assembly, interacts with DLG4/PSD-95. As to expression, expressed in various brain areas.

It localises to the cell membrane. Its subcellular location is the postsynaptic density. It is found in the synapse. Its function is as follows. May play a role in the molecular organization of synapses and neuronal cell signaling. Could be an adapter protein linking ion channel to the subsynaptic cytoskeleton. May induce enrichment of PSD-95/SAP90 at the plasma membrane. The polypeptide is Disks large-associated protein 2 (Mus musculus (Mouse)).